A 130-amino-acid polypeptide reads, in one-letter code: Small ribosomal subunit protein uS9 (130 aa).

Residues 111 to 130 (VERKKPGLKKARKASQFSKR) are disordered. Positions 116–130 (PGLKKARKASQFSKR) are enriched in basic residues.

It belongs to the universal ribosomal protein uS9 family.

In Lactococcus lactis subsp. lactis (strain IL1403) (Streptococcus lactis), this protein is Small ribosomal subunit protein uS9.